The sequence spans 278 residues: 4-diphosphocytidyl-2-C-methyl-D-erythritol kinase (278 aa).

Lysine 9 is a catalytic residue. 89–99 (PVASGIGGGSA) lines the ATP pocket. The active site involves aspartate 128.

It belongs to the GHMP kinase family. IspE subfamily.

It catalyses the reaction 4-CDP-2-C-methyl-D-erythritol + ATP = 4-CDP-2-C-methyl-D-erythritol 2-phosphate + ADP + H(+). Its pathway is isoprenoid biosynthesis; isopentenyl diphosphate biosynthesis via DXP pathway; isopentenyl diphosphate from 1-deoxy-D-xylulose 5-phosphate: step 3/6. Catalyzes the phosphorylation of the position 2 hydroxy group of 4-diphosphocytidyl-2C-methyl-D-erythritol. The chain is 4-diphosphocytidyl-2-C-methyl-D-erythritol kinase from Cereibacter sphaeroides (strain ATCC 17029 / ATH 2.4.9) (Rhodobacter sphaeroides).